The following is a 229-amino-acid chain: Cytochrome c oxidase subunit 2 (229 aa).

The Mitochondrial intermembrane portion of the chain corresponds to 1-14 (MAQQAQLGLQDAAS). Residues 15–45 (PIMEELIHFHDHTLTVVFLISVLIFYLIIVM) traverse the membrane as a helical segment. At 46–59 (VTTTFMNKHSLDSQ) the chain is on the mitochondrial matrix side. A helical transmembrane segment spans residues 60-87 (EVEIVWTVMPAIVLITIALPSLRILYLT). Residues 88–229 (DEISNPHLTI…ENWTTKVLAS (142 aa)) are Mitochondrial intermembrane-facing. 6 residues coordinate Cu cation: H161, C196, E198, C200, H204, and M207. E198 serves as a coordination point for Mg(2+).

The protein belongs to the cytochrome c oxidase subunit 2 family. In terms of assembly, component of the cytochrome c oxidase (complex IV, CIV), a multisubunit enzyme composed of 14 subunits. The complex is composed of a catalytic core of 3 subunits MT-CO1, MT-CO2 and MT-CO3, encoded in the mitochondrial DNA, and 11 supernumerary subunits COX4I, COX5A, COX5B, COX6A, COX6B, COX6C, COX7A, COX7B, COX7C, COX8 and NDUFA4, which are encoded in the nuclear genome. The complex exists as a monomer or a dimer and forms supercomplexes (SCs) in the inner mitochondrial membrane with NADH-ubiquinone oxidoreductase (complex I, CI) and ubiquinol-cytochrome c oxidoreductase (cytochrome b-c1 complex, complex III, CIII), resulting in different assemblies (supercomplex SCI(1)III(2)IV(1) and megacomplex MCI(2)III(2)IV(2)). Found in a complex with TMEM177, COA6, COX18, COX20, SCO1 and SCO2. Interacts with TMEM177 in a COX20-dependent manner. Interacts with COX20. Interacts with COX16. The cofactor is Cu cation.

Its subcellular location is the mitochondrion inner membrane. It carries out the reaction 4 Fe(II)-[cytochrome c] + O2 + 8 H(+)(in) = 4 Fe(III)-[cytochrome c] + 2 H2O + 4 H(+)(out). Its function is as follows. Component of the cytochrome c oxidase, the last enzyme in the mitochondrial electron transport chain which drives oxidative phosphorylation. The respiratory chain contains 3 multisubunit complexes succinate dehydrogenase (complex II, CII), ubiquinol-cytochrome c oxidoreductase (cytochrome b-c1 complex, complex III, CIII) and cytochrome c oxidase (complex IV, CIV), that cooperate to transfer electrons derived from NADH and succinate to molecular oxygen, creating an electrochemical gradient over the inner membrane that drives transmembrane transport and the ATP synthase. Cytochrome c oxidase is the component of the respiratory chain that catalyzes the reduction of oxygen to water. Electrons originating from reduced cytochrome c in the intermembrane space (IMS) are transferred via the dinuclear copper A center (CU(A)) of subunit 2 and heme A of subunit 1 to the active site in subunit 1, a binuclear center (BNC) formed by heme A3 and copper B (CU(B)). The BNC reduces molecular oxygen to 2 water molecules using 4 electrons from cytochrome c in the IMS and 4 protons from the mitochondrial matrix. The protein is Cytochrome c oxidase subunit 2 (MT-CO2) of Petromyzon marinus (Sea lamprey).